Reading from the N-terminus, the 126-residue chain is Ribosome-binding factor A (126 aa).

The protein belongs to the RbfA family. Monomer. Binds 30S ribosomal subunits, but not 50S ribosomal subunits or 70S ribosomes.

Its subcellular location is the cytoplasm. One of several proteins that assist in the late maturation steps of the functional core of the 30S ribosomal subunit. Associates with free 30S ribosomal subunits (but not with 30S subunits that are part of 70S ribosomes or polysomes). Required for efficient processing of 16S rRNA. May interact with the 5'-terminal helix region of 16S rRNA. This is Ribosome-binding factor A from Thermosipho africanus (strain TCF52B).